The sequence spans 284 residues: GPN-loop GTPase 3 (284 aa).

Position 13–18 (13–18 (GSGKST)) interacts with GTP. Residues 72-74 (GPN) carry the Gly-Pro-Asn (GPN)-loop; involved in dimer interface motif. GTP is bound at residue 174–177 (TKMD). The interval 261-284 (KEPKEHEDESSSMFDEYFQEHQNE) is disordered.

It belongs to the GPN-loop GTPase family. Heterodimer with GPN1. Binds to RNA polymerase II (RNAPII). Interacts directly with subunits RPB4 and RPB7 and the CTD of RPB1.

Small GTPase required for proper localization of RNA polymerase II (RNAPII). May act at an RNAP assembly step prior to nuclear import. This chain is GPN-loop GTPase 3, found in Bos taurus (Bovine).